Here is a 213-residue protein sequence, read N- to C-terminus: Uridine kinase (213 aa).

An ATP-binding site is contributed by Gly-14–Ser-21.

The protein belongs to the uridine kinase family.

The protein resides in the cytoplasm. The enzyme catalyses uridine + ATP = UMP + ADP + H(+). The catalysed reaction is cytidine + ATP = CMP + ADP + H(+). Its pathway is pyrimidine metabolism; CTP biosynthesis via salvage pathway; CTP from cytidine: step 1/3. It participates in pyrimidine metabolism; UMP biosynthesis via salvage pathway; UMP from uridine: step 1/1. The polypeptide is Uridine kinase (Vibrio parahaemolyticus serotype O3:K6 (strain RIMD 2210633)).